We begin with the raw amino-acid sequence, 854 residues long: Fibronectin-binding protein PlpA (854 aa).

Residues 1–24 are compositionally biased toward low complexity; it reads MDNNQNNFNQPGQQGFDQYQQQSG. The segment at 1-33 is disordered; it reads MDNNQNNFNQPGQQGFDQYQQQSGALVSYGYDA. The tract at residues 91 to 109 is fibronectin-binding; the sequence is QYNQQQNQGYEQQYDEYGN. Disordered stretches follow at residues 247-327, 411-434, 743-766, and 835-854; these read YEQE…LEAP, SSNN…EDSN, TINP…QLPP, and IQPS…YNNR. The span at 258–267 shows a compositional bias: basic and acidic residues; the sequence is EPAHEQDLRE. Polar residues-rich tracts occupy residues 311–320 and 411–428; these read TVNQPDQTPI and SSNN…TSNE. Residues 384 to 622 adopt a coiled-coil conformation; the sequence is NLEEIQKVKL…SSFQKALSEV (239 aa). Residues 746–764 are compositionally biased toward pro residues; that stretch reads PPQPQPQALPQPHPQPQQL.

The protein resides in the cell membrane. Binds immobilized fibronectin, specifically the gelatin/heparin-binding domain. This is Fibronectin-binding protein PlpA (plpA) from Mycoplasmoides gallisepticum (strain R(low / passage 15 / clone 2)) (Mycoplasma gallisepticum).